Here is a 513-residue protein sequence, read N- to C-terminus: ATP synthase subunit alpha (513 aa).

169-176 (GDRQTGKS) serves as a coordination point for ATP.

Belongs to the ATPase alpha/beta chains family. As to quaternary structure, F-type ATPases have 2 components, CF(1) - the catalytic core - and CF(0) - the membrane proton channel. CF(1) has five subunits: alpha(3), beta(3), gamma(1), delta(1), epsilon(1). CF(0) has three main subunits: a(1), b(2) and c(9-12). The alpha and beta chains form an alternating ring which encloses part of the gamma chain. CF(1) is attached to CF(0) by a central stalk formed by the gamma and epsilon chains, while a peripheral stalk is formed by the delta and b chains.

The protein localises to the cell inner membrane. It catalyses the reaction ATP + H2O + 4 H(+)(in) = ADP + phosphate + 5 H(+)(out). In terms of biological role, produces ATP from ADP in the presence of a proton gradient across the membrane. The alpha chain is a regulatory subunit. This Blochmanniella floridana protein is ATP synthase subunit alpha.